Consider the following 365-residue polypeptide: Chorismate synthase (365 aa).

Residues Arg48 and Arg54 each coordinate NADP(+). FMN contacts are provided by residues 131–133 (RSS), 243–244 (NA), Gly288, 303–307 (KPTSS), and Arg329.

The protein belongs to the chorismate synthase family. Homotetramer. It depends on FMNH2 as a cofactor.

The enzyme catalyses 5-O-(1-carboxyvinyl)-3-phosphoshikimate = chorismate + phosphate. The protein operates within metabolic intermediate biosynthesis; chorismate biosynthesis; chorismate from D-erythrose 4-phosphate and phosphoenolpyruvate: step 7/7. Functionally, catalyzes the anti-1,4-elimination of the C-3 phosphate and the C-6 proR hydrogen from 5-enolpyruvylshikimate-3-phosphate (EPSP) to yield chorismate, which is the branch point compound that serves as the starting substrate for the three terminal pathways of aromatic amino acid biosynthesis. This reaction introduces a second double bond into the aromatic ring system. In Agrobacterium fabrum (strain C58 / ATCC 33970) (Agrobacterium tumefaciens (strain C58)), this protein is Chorismate synthase.